A 249-amino-acid chain; its full sequence is Deoxyribose-phosphate aldolase (249 aa).

Aspartate 105 functions as the Proton donor/acceptor in the catalytic mechanism. The active-site Schiff-base intermediate with acetaldehyde is the lysine 168. Lysine 216 functions as the Proton donor/acceptor in the catalytic mechanism.

Belongs to the DeoC/FbaB aldolase family. DeoC type 1 subfamily.

Its subcellular location is the cytoplasm. It catalyses the reaction 2-deoxy-D-ribose 5-phosphate = D-glyceraldehyde 3-phosphate + acetaldehyde. It participates in carbohydrate degradation; 2-deoxy-D-ribose 1-phosphate degradation; D-glyceraldehyde 3-phosphate and acetaldehyde from 2-deoxy-alpha-D-ribose 1-phosphate: step 2/2. In terms of biological role, catalyzes a reversible aldol reaction between acetaldehyde and D-glyceraldehyde 3-phosphate to generate 2-deoxy-D-ribose 5-phosphate. This chain is Deoxyribose-phosphate aldolase, found in Corynebacterium jeikeium (strain K411).